A 73-amino-acid chain; its full sequence is Large ribosomal subunit protein bL31 (73 aa).

This sequence belongs to the bacterial ribosomal protein bL31 family. Type A subfamily. In terms of assembly, part of the 50S ribosomal subunit.

Binds the 23S rRNA. This is Large ribosomal subunit protein bL31 from Dinoroseobacter shibae (strain DSM 16493 / NCIMB 14021 / DFL 12).